Reading from the N-terminus, the 209-residue chain is Thymidine kinase (209 aa).

ATP contacts are provided by residues 9-16 (AAMNAGKS) and 88-91 (DEAQ). Glu89 serves as the catalytic Proton acceptor. Residues Cys146, Cys148, Cys183, and His186 each coordinate Zn(2+).

Belongs to the thymidine kinase family. Homotetramer.

It is found in the cytoplasm. It carries out the reaction thymidine + ATP = dTMP + ADP + H(+). The chain is Thymidine kinase from Legionella pneumophila subsp. pneumophila (strain Philadelphia 1 / ATCC 33152 / DSM 7513).